The sequence spans 295 residues: Small ribosomal subunit protein uS2 (295 aa).

Ser-2 carries the N-acetylserine modification. The residue at position 43 (Ser-43) is a Phosphoserine. Lys-52 carries the N6-acetyllysine modification. Positions 54 to 113 are interaction with PPP1R16B; it reads TWEKLLLAARAIVAIENPADVSVISSRNTGQRAVLKFAAATGATPIAGRFTPGTFTNQIQ. An N6-acetyllysine; alternate modification is found at Lys-89. Lys-89 is covalently cross-linked (Glycyl lysine isopeptide (Lys-Gly) (interchain with G-Cter in SUMO2); alternate). Thr-97 carries the phosphothreonine modification. 2 laminin-binding regions span residues 161–180 and 205–229; these read IPCN…MLAR and RDPE…EFQG. 5 [DE]-W-[ST] repeats span residues 230–232, 247–249, 266–268, 275–277, and 293–295; these read EWT, DWS, and EWS. The interval 242–295 is laminin-binding; sequence QPEVADWSEGVQVPSVPIQQFPTEDWSAQPATEDWSAAPTAQATEWVGATTEWS. The tract at residues 266-295 is disordered; it reads DWSAQPATEDWSAAPTAQATEWVGATTEWS.

It belongs to the universal ribosomal protein uS2 family. Monomer (37LRP) and homodimer (67LR). Component of the small ribosomal subunit. Mature ribosomes consist of a small (40S) and a large (60S) subunit. The 40S subunit contains about 33 different proteins and 1 molecule of RNA (18S). The 60S subunit contains about 49 different proteins and 3 molecules of RNA (28S, 5.8S and 5S). Interacts with RPS21. Interacts with several laminins including at least LAMB1. Interacts with MDK. The mature dimeric form interacts with PPP1R16B (via its fourth ankyrin repeat). Interacts with PPP1CA only in the presence of PPP1R16B. Post-translationally, acylated. Acylation may be a prerequisite for conversion of the monomeric 37 kDa laminin receptor precursor (37LRP) to the mature dimeric 67 kDa laminin receptor (67LR), and may provide a mechanism for membrane association. In terms of processing, cleaved by stromelysin-3 (ST3) at the cell surface. Cleavage by stromelysin-3 may be a mechanism to alter cell-extracellular matrix interactions. As to expression, expressed in most neurons and in a subset of glial cells. The overall distribution of LR correlates with that reported for laminin-1 but also with brain regions classically associated with prion-related neurodegeneration.

It localises to the cell membrane. The protein localises to the cytoplasm. The protein resides in the nucleus. In terms of biological role, required for the assembly and/or stability of the 40S ribosomal subunit. Required for the processing of the 20S rRNA-precursor to mature 18S rRNA in a late step of the maturation of 40S ribosomal subunits. Also functions as a cell surface receptor for laminin. Plays a role in cell adhesion to the basement membrane and in the consequent activation of signaling transduction pathways. May play a role in cell fate determination and tissue morphogenesis. Also acts as a receptor for several other ligands, including the pathogenic prion protein, viruses, and bacteria. Acts as a PPP1R16B-dependent substrate of PPP1CA. The chain is Small ribosomal subunit protein uS2 (Rpsa) from Rattus norvegicus (Rat).